We begin with the raw amino-acid sequence, 337 residues long: GDP-fucose transporter, Golgi (337 aa).

The next 8 helical transmembrane spans lie at asparagine 13–valine 35, valine 45–valine 67, isoleucine 95–threonine 117, tyrosine 121–leucine 140, serine 145–valine 163, serine 173–isoleucine 192, valine 205–asparagine 227, and serine 242–leucine 264.

It belongs to the TPT transporter family. SLC35C subfamily.

The protein resides in the golgi apparatus membrane. Its function is as follows. Involved in GDP-fucose import from the cytoplasm into the Golgi lumen. Plays a major role in the fucosylation of N-glycans. Functions redundantly with Efr in the O-fucosylation of Notch, positively regulating Notch signaling. In Drosophila melanogaster (Fruit fly), this protein is GDP-fucose transporter, Golgi.